Here is a 98-residue protein sequence, read N- to C-terminus: Small ribosomal subunit protein bS6 (98 aa).

It belongs to the bacterial ribosomal protein bS6 family.

Its function is as follows. Binds together with bS18 to 16S ribosomal RNA. The polypeptide is Small ribosomal subunit protein bS6 (Lacticaseibacillus paracasei (strain ATCC 334 / BCRC 17002 / CCUG 31169 / CIP 107868 / KCTC 3260 / NRRL B-441) (Lactobacillus paracasei)).